Consider the following 381-residue polypeptide: Queuine tRNA-ribosyltransferase (381 aa).

The active-site Proton acceptor is aspartate 89. Residues 89-93, aspartate 143, glutamine 187, and glycine 214 each bind substrate; that span reads DSGGF. The RNA binding stretch occupies residues 245–251; that stretch reads GVGKPED. Residue aspartate 264 is the Nucleophile of the active site. Residues 269–273 form an RNA binding; important for wobble base 34 recognition region; sequence TRNAR. 4 residues coordinate Zn(2+): cysteine 302, cysteine 304, cysteine 307, and histidine 333.

This sequence belongs to the queuine tRNA-ribosyltransferase family. Homodimer. Within each dimer, one monomer is responsible for RNA recognition and catalysis, while the other monomer binds to the replacement base PreQ1. It depends on Zn(2+) as a cofactor.

It carries out the reaction 7-aminomethyl-7-carbaguanine + guanosine(34) in tRNA = 7-aminomethyl-7-carbaguanosine(34) in tRNA + guanine. It participates in tRNA modification; tRNA-queuosine biosynthesis. Functionally, catalyzes the base-exchange of a guanine (G) residue with the queuine precursor 7-aminomethyl-7-deazaguanine (PreQ1) at position 34 (anticodon wobble position) in tRNAs with GU(N) anticodons (tRNA-Asp, -Asn, -His and -Tyr). Catalysis occurs through a double-displacement mechanism. The nucleophile active site attacks the C1' of nucleotide 34 to detach the guanine base from the RNA, forming a covalent enzyme-RNA intermediate. The proton acceptor active site deprotonates the incoming PreQ1, allowing a nucleophilic attack on the C1' of the ribose to form the product. After dissociation, two additional enzymatic reactions on the tRNA convert PreQ1 to queuine (Q), resulting in the hypermodified nucleoside queuosine (7-(((4,5-cis-dihydroxy-2-cyclopenten-1-yl)amino)methyl)-7-deazaguanosine). The chain is Queuine tRNA-ribosyltransferase from Pectobacterium atrosepticum (strain SCRI 1043 / ATCC BAA-672) (Erwinia carotovora subsp. atroseptica).